Reading from the N-terminus, the 123-residue chain is Small ribosomal subunit protein uS13 (123 aa).

The disordered stretch occupies residues 95–123 (GLPVRGQSSKTNARTRKGPRRSVMSRKKK). Basic residues predominate over residues 107-123 (ARTRKGPRRSVMSRKKK).

This sequence belongs to the universal ribosomal protein uS13 family. As to quaternary structure, part of the 30S ribosomal subunit. Forms a loose heterodimer with protein S19. Forms two bridges to the 50S subunit in the 70S ribosome.

Functionally, located at the top of the head of the 30S subunit, it contacts several helices of the 16S rRNA. In the 70S ribosome it contacts the 23S rRNA (bridge B1a) and protein L5 of the 50S subunit (bridge B1b), connecting the 2 subunits; these bridges are implicated in subunit movement. Contacts the tRNAs in the A and P-sites. In Maridesulfovibrio salexigens (strain ATCC 14822 / DSM 2638 / NCIMB 8403 / VKM B-1763) (Desulfovibrio salexigens), this protein is Small ribosomal subunit protein uS13.